A 153-amino-acid polypeptide reads, in one-letter code: Interleukin-4 (153 aa).

Positions 1 to 24 (MGLTSQLLPPLFFLLACAGNFVHG) are cleaved as a signal peptide. Cystine bridges form between Cys27–Cys151, Cys48–Cys89, and Cys70–Cys123. An N-linked (GlcNAc...) asparagine glycan is attached at Asn62.

Belongs to the IL-4/IL-13 family. As to quaternary structure, interacts with IL4R. Interacts with IL13RA1.

The protein localises to the secreted. Cytokine secreted primarily by mast cells, T-cells, eosinophils, and basophils that plays a role in regulating antibody production, hematopoiesis and inflammation, and the development of effector T-cell responses. Induces the expression of class II MHC molecules on resting B-cells. Enhances both secretion and cell surface expression of IgE and IgG1. Also regulates the expression of the low affinity Fc receptor for IgE (CD23) on both lymphocytes and monocytes. Positively regulates IL31RA expression in macrophages. Stimulates autophagy in dendritic cells by interfering with mTORC1 signaling and through the induction of RUFY4. In addition, plays a critical role in higher functions of the normal brain, such as memory and learning. Upon binding to IL4, IL4R receptor dimerizes either with the common IL2R gamma chain/IL2RG to produce the type 1 signaling complex, located mainly on hematopoietic cells, or with the IL13RA1 to produce the type 2 complex, which is also expressed on nonhematopoietic cells. Engagement of both types of receptors initiates JAK3 and to a lower extend JAK1 phosphorylation leading to activation of the signal transducer and activator of transcription 6/STAT6. The chain is Interleukin-4 (IL4) from Homo sapiens (Human).